Consider the following 150-residue polypeptide: WFNDLKQQCRAEMISIIDVTCQAIKHANTTRVGLLATTATVKARIYQDNLITDNIDCYTPDDADQHQVMESIYAYKSGDIAGAYSLLSPVKDRLLQAGVEKIILGCTELPLILEQEVRTSPQHYVDATEELIKKTVEWYFTHNTRNNIAA.

This sequence belongs to the aspartate/glutamate racemases family.

This is an uncharacterized protein from Pectobacterium carotovorum subsp. carotovorum (Erwinia carotovora subsp. carotovora).